The primary structure comprises 498 residues: L-proline--[L-prolyl-carrier protein] ligase (498 aa).

This sequence belongs to the ATP-dependent AMP-binding enzyme family.

The catalysed reaction is holo-[peptidyl-carrier protein] + L-proline + ATP = L-prolyl-[peptidyl-carrier protein] + AMP + diphosphate. Involved in the biosynthesis of pyoluteorin. Catalyzes the conversion of L-proline to L-prolyl-AMP and the transfer of the L-prolyl group to acyl carrier protein PltL. This is L-proline--[L-prolyl-carrier protein] ligase from Pseudomonas fluorescens (strain ATCC BAA-477 / NRRL B-23932 / Pf-5).